The chain runs to 141 residues: Cystatin (141 aa).

The first 26 residues, 1–26 (MVRSQLPVAAPLRLLCALLLLPSATM), serve as a signal peptide directing secretion. In terms of domain architecture, Cystatin spans 29 to 129 (GGLSPRSVTD…CHFQVWSRPW (101 aa)). The Secondary area of contact signature appears at 73-77 (QVVSG). Disulfide bonds link Cys91-Cys107 and Cys120-Cys140.

Belongs to the cystatin family. Expressed at a low level by the venom gland (at protein level).

It localises to the secreted. Its function is as follows. Inhibits various C1 cysteine proteases including cathepsin L, papain and cathepsin B. This protein has no toxic activity and its function in the venom is unknown. It may play a role as a housekeeping or regulatory protein. This chain is Cystatin, found in Micropechis ikaheca (New Guinean small-eyed snake).